A 288-amino-acid chain; its full sequence is HTH-type transcriptional regulator CzcR (288 aa).

The HTH lysR-type domain occupies 1–58; the sequence is MELRDLQIFQSVADQGSVSSAAKELNYVQSNVTTRIKQLENELKTPLFYRHKRGMTLT. Positions 18–37 form a DNA-binding region, H-T-H motif; the sequence is VSSAAKELNYVQSNVTTRIK.

Belongs to the LysR transcriptional regulatory family.

The chain is HTH-type transcriptional regulator CzcR (czcR) from Bacillus thuringiensis subsp. konkukian (strain 97-27).